The primary structure comprises 268 residues: Ubiquinone biosynthesis protein COQ4 homolog, mitochondrial (268 aa).

Residues histidine 171, aspartate 172, histidine 175, and glutamate 187 each contribute to the Zn(2+) site.

Belongs to the COQ4 family. In terms of assembly, component of a multi-subunit COQ enzyme complex. The cofactor is Zn(2+).

It localises to the mitochondrion inner membrane. It carries out the reaction a 4-hydroxy-3-methoxy-5-(all-trans-polyprenyl)benzoate + H(+) = a 2-methoxy-6-(all-trans-polyprenyl)phenol + CO2. It participates in cofactor biosynthesis; ubiquinone biosynthesis. Its function is as follows. Lyase that catalyzes the C1-decarboxylation of 4-hydroxy-3-methoxy-5-(all-trans-polyprenyl)benzoic acid into 2-methoxy-6-(all-trans-polyprenyl)phenol during ubiquinone biosynthesis. This Drosophila erecta (Fruit fly) protein is Ubiquinone biosynthesis protein COQ4 homolog, mitochondrial.